A 160-amino-acid chain; its full sequence is NADH-quinone oxidoreductase subunit B (160 aa).

Positions 37, 38, 102, and 132 each coordinate [4Fe-4S] cluster.

The protein belongs to the complex I 20 kDa subunit family. NDH-1 is composed of 14 different subunits. Subunits NuoB, C, D, E, F, and G constitute the peripheral sector of the complex. It depends on [4Fe-4S] cluster as a cofactor.

The protein localises to the cell membrane. It carries out the reaction a quinone + NADH + 5 H(+)(in) = a quinol + NAD(+) + 4 H(+)(out). Its function is as follows. NDH-1 shuttles electrons from NADH, via FMN and iron-sulfur (Fe-S) centers, to quinones in the respiratory chain. Couples the redox reaction to proton translocation (for every two electrons transferred, four hydrogen ions are translocated across the cytoplasmic membrane), and thus conserves the redox energy in a proton gradient. The polypeptide is NADH-quinone oxidoreductase subunit B (Polynucleobacter asymbioticus (strain DSM 18221 / CIP 109841 / QLW-P1DMWA-1) (Polynucleobacter necessarius subsp. asymbioticus)).